The following is a 78-amino-acid chain: Conotoxin 6 (78 aa).

The first 22 residues, M1–A22, serve as a signal peptide directing secretion. Positions D23–R51 are excised as a propeptide. 3 cysteine pairs are disulfide-bonded: C53–C69, C60–C73, and C68–C77.

Belongs to the conotoxin O1 superfamily. In terms of tissue distribution, expressed by the venom duct.

It is found in the secreted. This chain is Conotoxin 6, found in Conus imperialis (Imperial cone).